Here is a 354-residue protein sequence, read N- to C-terminus: Fusarinine C esterase sidJ (354 aa).

This sequence belongs to the sidJ hydrolase family. As to quaternary structure, homodimer.

The enzyme catalyses fusarinine C + 3 H2O = 3 fusarinine + Fe(3+). In terms of biological role, displays specific fusarinine C (FsC) esterase activity but does not hydrolyze triacetylfusarinine C (TAFC), which has the same core structure as fusarinine C. Both extra- and intracellular siderophores have been shown to be crucial for the virulence. Subsequent to chelation of iron and uptake, FsC and TAFC are hydrolyzed and the iron is transferred to the metabolism or to the intracellular siderophore ferricrocin (FC) for transport and storage of iron. This is Fusarinine C esterase sidJ from Aspergillus fumigatus (strain ATCC MYA-4609 / CBS 101355 / FGSC A1100 / Af293) (Neosartorya fumigata).